Consider the following 291-residue polypeptide: ATP synthase gamma chain (291 aa).

It belongs to the ATPase gamma chain family. F-type ATPases have 2 components, CF(1) - the catalytic core - and CF(0) - the membrane proton channel. CF(1) has five subunits: alpha(3), beta(3), gamma(1), delta(1), epsilon(1). CF(0) has three main subunits: a, b and c.

It localises to the cell inner membrane. Functionally, produces ATP from ADP in the presence of a proton gradient across the membrane. The gamma chain is believed to be important in regulating ATPase activity and the flow of protons through the CF(0) complex. This Variovorax paradoxus (strain S110) protein is ATP synthase gamma chain.